Here is a 230-residue protein sequence, read N- to C-terminus: Large ribosomal subunit protein uL1 (230 aa).

The protein belongs to the universal ribosomal protein uL1 family. In terms of assembly, part of the 50S ribosomal subunit.

In terms of biological role, binds directly to 23S rRNA. The L1 stalk is quite mobile in the ribosome, and is involved in E site tRNA release. Its function is as follows. Protein L1 is also a translational repressor protein, it controls the translation of the L11 operon by binding to its mRNA. The sequence is that of Large ribosomal subunit protein uL1 from Bifidobacterium adolescentis (strain ATCC 15703 / DSM 20083 / NCTC 11814 / E194a).